The chain runs to 1072 residues: Guanylyl cyclase C (1072 aa).

An N-terminal signal peptide occupies residues 1-19 (MTSLLGLAVRLLLFQPALM). The Extracellular portion of the chain corresponds to 20–433 (VFWASQVRQN…VPGLGPQILM (414 aa)). N-linked (GlcNAc...) asparagine glycans are attached at residues asparagine 32, asparagine 75, asparagine 79, asparagine 179, asparagine 188, asparagine 195, asparagine 284, asparagine 307, asparagine 345, and asparagine 402. Residues 434-454 (IAVFTLTGILVVLLLIALLVL) traverse the membrane as a helical segment. Residues 455 to 1072 (RKYRRDHALR…NNSDHDSTYF (618 aa)) are Cytoplasmic-facing. One can recognise a Protein kinase domain in the interval 489–748 (LKIDDDRRRD…KIESTLAKIF (260 aa)). Residues 823–953 (TIYFSDIVGF…DTVNTASRME (131 aa)) form the Guanylate cyclase domain.

It belongs to the adenylyl cyclase class-4/guanylyl cyclase family. In terms of assembly, homotrimer. Interacts via its C-terminal region with NHERF4. Interacts with the lectin chaperone VIP36. Glycosylation at Asn-75 and/or Asn-79 is required for interaction with VIP36 while glycosylation at Asn-345 and Asn-402 modulates ligand-mediated GC-C activation.

It is found in the cell membrane. Its subcellular location is the endoplasmic reticulum membrane. The catalysed reaction is GTP = 3',5'-cyclic GMP + diphosphate. Functionally, guanylyl cyclase that catalyzes synthesis of cyclic GMP (cGMP) from GTP. The sequence is that of Guanylyl cyclase C (Gucy2c) from Mus musculus (Mouse).